The chain runs to 635 residues: 5-aminolevulinate synthase, non-specific, mitochondrial (635 aa).

A mitochondrion-targeting transit peptide spans 1-56; sequence MEAVVRRCPFLARVSQAFLQKAGPSLLFYAQHCPKMMEAAPPAAARGLATSASRGQ. Low complexity predominate over residues 44–66; that stretch reads AARGLATSASRGQQVEETPAAQP. The disordered stretch occupies residues 44–94; it reads AARGLATSASRGQQVEETPAAQPEAKKAKEVAQQNTDGSQPPAGHPPAAAV. Residues Arg212, Ser329, and Lys348 each contribute to the substrate site. 3 residues coordinate pyridoxal 5'-phosphate: Ser381, His409, and Thr437. Lys440 is an active-site residue. Lys440 is subject to N6-(pyridoxal phosphate)lysine. Pyridoxal 5'-phosphate is bound by residues Thr469 and Thr470. Substrate is bound at residue Thr557.

The protein belongs to the class-II pyridoxal-phosphate-dependent aminotransferase family. In terms of assembly, homodimer. Pyridoxal 5'-phosphate is required as a cofactor. Ubiquitous.

It is found in the mitochondrion inner membrane. The enzyme catalyses succinyl-CoA + glycine + H(+) = 5-aminolevulinate + CO2 + CoA. The protein operates within porphyrin-containing compound metabolism; protoporphyrin-IX biosynthesis; 5-aminolevulinate from glycine: step 1/1. Functionally, catalyzes the pyridoxal 5'-phosphate (PLP)-dependent condensation of succinyl-CoA and glycine to form aminolevulinic acid (ALA), with CoA and CO2 as by-products. This chain is 5-aminolevulinate synthase, non-specific, mitochondrial (ALAS1), found in Gallus gallus (Chicken).